Consider the following 282-residue polypeptide: MSLVTSLTYVLPHRLLSSLARALAYSKTPATKQWLIDTVTRKFGVDLSEAQEPDPRVYPTFNAFFTRALKPGARVPDADPQALLMPADGRISQLGPIENGRIFQAKGQSFTAAELLGDESAAVPFHNGLFATVYLSPKDYHRVHMPWSGTLRETVHVPGRLFSVGPDAVRNVPRLFARNERLVCHFDTDFGPMASVMVGALLVSGVETVWSGVEIPRYGDRITRKDYRGKGITLERFAEMARFNYGSTVIVLLPPGVAALEGGLAAESSVRLGQALARRQVA.

Active-site charge relay system; for autoendoproteolytic cleavage activity residues include D88, H144, and S247. The Schiff-base intermediate with substrate; via pyruvic acid; for decarboxylase activity role is filled by S247. Pyruvic acid (Ser); by autocatalysis is present on S247.

It belongs to the phosphatidylserine decarboxylase family. PSD-B subfamily. Prokaryotic type I sub-subfamily. Heterodimer of a large membrane-associated beta subunit and a small pyruvoyl-containing alpha subunit. Requires pyruvate as cofactor. In terms of processing, is synthesized initially as an inactive proenzyme. Formation of the active enzyme involves a self-maturation process in which the active site pyruvoyl group is generated from an internal serine residue via an autocatalytic post-translational modification. Two non-identical subunits are generated from the proenzyme in this reaction, and the pyruvate is formed at the N-terminus of the alpha chain, which is derived from the carboxyl end of the proenzyme. The autoendoproteolytic cleavage occurs by a canonical serine protease mechanism, in which the side chain hydroxyl group of the serine supplies its oxygen atom to form the C-terminus of the beta chain, while the remainder of the serine residue undergoes an oxidative deamination to produce ammonia and the pyruvoyl prosthetic group on the alpha chain. During this reaction, the Ser that is part of the protease active site of the proenzyme becomes the pyruvoyl prosthetic group, which constitutes an essential element of the active site of the mature decarboxylase.

The protein resides in the cell membrane. The enzyme catalyses a 1,2-diacyl-sn-glycero-3-phospho-L-serine + H(+) = a 1,2-diacyl-sn-glycero-3-phosphoethanolamine + CO2. It participates in phospholipid metabolism; phosphatidylethanolamine biosynthesis; phosphatidylethanolamine from CDP-diacylglycerol: step 2/2. Functionally, catalyzes the formation of phosphatidylethanolamine (PtdEtn) from phosphatidylserine (PtdSer). The sequence is that of Phosphatidylserine decarboxylase proenzyme from Xanthomonas campestris pv. campestris (strain B100).